A 61-amino-acid polypeptide reads, in one-letter code: Photosystem II reaction center protein K (61 aa).

A propeptide spanning residues methionine 1–threonine 24 is cleaved from the precursor. Residues methionine 40–phenylalanine 60 form a helical membrane-spanning segment.

The protein belongs to the PsbK family. In terms of assembly, PSII is composed of 1 copy each of membrane proteins PsbA, PsbB, PsbC, PsbD, PsbE, PsbF, PsbH, PsbI, PsbJ, PsbK, PsbL, PsbM, PsbT, PsbX, PsbY, PsbZ, Psb30/Ycf12, at least 3 peripheral proteins of the oxygen-evolving complex and a large number of cofactors. It forms dimeric complexes.

Its subcellular location is the plastid. It is found in the chloroplast thylakoid membrane. Functionally, one of the components of the core complex of photosystem II (PSII). PSII is a light-driven water:plastoquinone oxidoreductase that uses light energy to abstract electrons from H(2)O, generating O(2) and a proton gradient subsequently used for ATP formation. It consists of a core antenna complex that captures photons, and an electron transfer chain that converts photonic excitation into a charge separation. This Populus alba (White poplar) protein is Photosystem II reaction center protein K.